Consider the following 511-residue polypeptide: Zinc finger and BTB domain-containing protein 45 (511 aa).

Positions 33-96 (CDVTVRIREA…LYSGSLVVAQ (64 aa)) constitute a BTB domain. A compositionally biased stretch (low complexity) spans 159–168 (ARPPGHPGAA). Disordered regions lie at residues 159-241 (ARPP…PDCA) and 294-403 (EDGA…PPTY). Over residues 206–224 (RGDEDDEESDDETDGEDGE) the composition is skewed to acidic residues. The segment covering 339–360 (PGPPAPPPSAPSGPAPAPPPAF) has biased composition (pro residues). The segment covering 378-397 (PAPSAAPTTAPSGTPARTPG) has biased composition (low complexity). C2H2-type zinc fingers lie at residues 403 to 425 (YECS…MFIH), 431 to 453 (HQCA…MVTH), 459 to 481 (FQCA…MRTH), and 486 to 508 (APCP…LAAH).

It belongs to the krueppel C2H2-type zinc-finger protein family.

The protein localises to the nucleus. Functionally, may be involved in transcriptional regulation. In the central nervous system, may play a role in glial cell differentiation. This Homo sapiens (Human) protein is Zinc finger and BTB domain-containing protein 45 (ZBTB45).